The sequence spans 158 residues: uncharacterized protein (158 aa).

Its function is as follows. The presence of the two linear plasmids, termed pGKL1 and pGKL2, in strains of Kluyveromyces lactis confers the killer phenotype to the host cell, by promoting the secretion of a toxin able to inhibit the growth of sensitive strains. This is an uncharacterized protein from Kluyveromyces lactis (strain ATCC 8585 / CBS 2359 / DSM 70799 / NBRC 1267 / NRRL Y-1140 / WM37) (Yeast).